A 164-amino-acid polypeptide reads, in one-letter code: Phosphopantetheine adenylyltransferase (164 aa).

Ser-10 contacts substrate. Residues Ser-10 to Phe-11 and His-18 contribute to the ATP site. 3 residues coordinate substrate: Lys-42, Met-74, and Arg-88. Residues Gly-89–Arg-91, Glu-99, and Tyr-124–Arg-130 contribute to the ATP site.

Belongs to the bacterial CoaD family. In terms of assembly, homohexamer. Requires Mg(2+) as cofactor.

The protein localises to the cytoplasm. The enzyme catalyses (R)-4'-phosphopantetheine + ATP + H(+) = 3'-dephospho-CoA + diphosphate. It participates in cofactor biosynthesis; coenzyme A biosynthesis; CoA from (R)-pantothenate: step 4/5. Its function is as follows. Reversibly transfers an adenylyl group from ATP to 4'-phosphopantetheine, yielding dephospho-CoA (dPCoA) and pyrophosphate. The sequence is that of Phosphopantetheine adenylyltransferase from Anaeromyxobacter dehalogenans (strain 2CP-1 / ATCC BAA-258).